We begin with the raw amino-acid sequence, 82 residues long: Cytochrome b559 subunit alpha (82 aa).

The helical transmembrane segment at Val-21–Trp-35 threads the bilayer. Residue His-23 participates in heme binding.

Belongs to the PsbE/PsbF family. As to quaternary structure, heterodimer of an alpha subunit and a beta subunit. PSII is composed of 1 copy each of membrane proteins PsbA, PsbB, PsbC, PsbD, PsbE, PsbF, PsbH, PsbI, PsbJ, PsbK, PsbL, PsbM, PsbT, PsbX, PsbY, PsbZ, Psb30/Ycf12, at least 3 peripheral proteins of the oxygen-evolving complex and a large number of cofactors. It forms dimeric complexes. Requires heme b as cofactor.

It localises to the plastid. It is found in the chloroplast thylakoid membrane. This b-type cytochrome is tightly associated with the reaction center of photosystem II (PSII). PSII is a light-driven water:plastoquinone oxidoreductase that uses light energy to abstract electrons from H(2)O, generating O(2) and a proton gradient subsequently used for ATP formation. It consists of a core antenna complex that captures photons, and an electron transfer chain that converts photonic excitation into a charge separation. This is Cytochrome b559 subunit alpha from Chlamydomonas reinhardtii (Chlamydomonas smithii).